We begin with the raw amino-acid sequence, 151 residues long: UPF0756 membrane protein Dred_1676 (151 aa).

4 helical membrane-spanning segments follow: residues 9–29 (VILLLIGLVAQSNLIAICASV), 47–67 (THGLELGLLFLLLSILVPIAT), 75–95 (LLYNVSSLPGFLSIVGGILAT), and 111–131 (IIFGLIVGSVIGIIFFNGQPV).

The protein belongs to the UPF0756 family.

The protein resides in the cell membrane. In Desulforamulus reducens (strain ATCC BAA-1160 / DSM 100696 / MI-1) (Desulfotomaculum reducens), this protein is UPF0756 membrane protein Dred_1676.